Reading from the N-terminus, the 714-residue chain is Phosphoribosylformylglycinamidine synthase subunit PurL (714 aa).

Histidine 34 is a catalytic residue. An ATP-binding site is contributed by tyrosine 37. Glutamate 78 lines the Mg(2+) pocket. Residues 79–82 (SHNH) and arginine 101 each bind substrate. The active-site Proton acceptor is histidine 80. Aspartate 102 is a binding site for Mg(2+). Glutamine 226 provides a ligand contact to substrate. Aspartate 254 contacts Mg(2+). 298–300 (ESQ) is a substrate binding site. Residues aspartate 474 and glycine 511 each contribute to the ATP site. Asparagine 512 is a binding site for Mg(2+). A substrate-binding site is contributed by serine 514.

The protein belongs to the FGAMS family. In terms of assembly, monomer. Part of the FGAM synthase complex composed of 1 PurL, 1 PurQ and 2 PurS subunits.

The protein localises to the cytoplasm. The enzyme catalyses N(2)-formyl-N(1)-(5-phospho-beta-D-ribosyl)glycinamide + L-glutamine + ATP + H2O = 2-formamido-N(1)-(5-O-phospho-beta-D-ribosyl)acetamidine + L-glutamate + ADP + phosphate + H(+). Its pathway is purine metabolism; IMP biosynthesis via de novo pathway; 5-amino-1-(5-phospho-D-ribosyl)imidazole from N(2)-formyl-N(1)-(5-phospho-D-ribosyl)glycinamide: step 1/2. Its function is as follows. Part of the phosphoribosylformylglycinamidine synthase complex involved in the purines biosynthetic pathway. Catalyzes the ATP-dependent conversion of formylglycinamide ribonucleotide (FGAR) and glutamine to yield formylglycinamidine ribonucleotide (FGAM) and glutamate. The FGAM synthase complex is composed of three subunits. PurQ produces an ammonia molecule by converting glutamine to glutamate. PurL transfers the ammonia molecule to FGAR to form FGAM in an ATP-dependent manner. PurS interacts with PurQ and PurL and is thought to assist in the transfer of the ammonia molecule from PurQ to PurL. In Methanothermobacter marburgensis (strain ATCC BAA-927 / DSM 2133 / JCM 14651 / NBRC 100331 / OCM 82 / Marburg) (Methanobacterium thermoautotrophicum), this protein is Phosphoribosylformylglycinamidine synthase subunit PurL.